A 1456-amino-acid chain; its full sequence is Macrophage mannose receptor 1 (1456 aa).

Residues 1–18 (MRLPLLLVFASVIPGAVL) form the signal peptide. The Extracellular portion of the chain corresponds to 19–1389 (LLDTRQFLIY…DPSKPSSNVA (1371 aa)). A Ricin B-type lectin domain is found at 22-142 (TRQFLIYNED…SGLWSRWKIY (121 aa)). 2 cysteine pairs are disulfide-bonded: Cys-35/Cys-49 and Cys-74/Cys-91. N-linked (GlcNAc...) asparagine glycosylation is present at Asn-104. The Fibronectin type-II domain occupies 163–211 (ANGATCAFPFKFENKWYADCTSAGRSDGWLWCGTTTDYDTDKLFGYCPL). Intrachain disulfides connect Cys-168/Cys-194, Cys-182/Cys-209, Cys-247/Cys-340, and Cys-316/Cys-332. Residues 225-341 (LTSVSYQINS…CVQKLGYICK (117 aa)) form the C-type lectin 1 domain. N-linked (GlcNAc...) asparagine glycosylation occurs at Asn-344. 4 consecutive C-type lectin domains span residues 369–487 (YAGH…YICK), 511–626 (HHFY…FVCK), 655–778 (RTSL…WICQ), and 807–923 (YKDY…FICQ). 2 disulfides stabilise this stretch: Cys-391–Cys-486 and Cys-463–Cys-478. The N-linked (GlcNAc...) asparagine glycan is linked to Asn-529. Cystine bridges form between Cys-532–Cys-625, Cys-600–Cys-617, Cys-646–Cys-659, Cys-680–Cys-777, Cys-753–Cys-769, Cys-828–Cys-922, and Cys-899–Cys-914. Residues Asn-926 and Asn-930 are each glycosylated (N-linked (GlcNAc...) asparagine). 3 C-type lectin domains span residues 952–1080 (YSNK…YICQ), 1102–1213 (YGKS…FLCK), and 1241–1356 (FHGH…YICK). 6 cysteine pairs are disulfide-bonded: Cys-977-Cys-1079, Cys-1052-Cys-1071, Cys-1123-Cys-1212, Cys-1190-Cys-1204, Cys-1263-Cys-1355, and Cys-1332-Cys-1347. Asn-1160 carries an N-linked (GlcNAc...) asparagine glycan. Residue Asn-1205 is glycosylated (N-linked (GlcNAc...) asparagine). Residues 1390–1410 (GVVIIVILLILTGAGLAAYFF) form a helical membrane-spanning segment. Residues 1411–1456 (YKKRRVHLPQEGAFENTLYFNSQSSPGTSDMKDLVGNIEQNEHSVI) are Cytoplasmic-facing.

(Microbial infection) Interacts with Dengue virus. In terms of assembly, (Microbial infection) May act as a receptor for hepatitis B virus, enabling uptake of the virus in hepatic dendritic cells.

It is found in the endosome membrane. The protein resides in the cell membrane. Mediates the endocytosis of glycoproteins by macrophages. Binds both sulfated and non-sulfated polysaccharide chains. In terms of biological role, (Microbial infection) Acts as a phagocytic receptor for bacteria, fungi and other pathogens. Functionally, (Microbial infection) Acts as a receptor for Dengue virus envelope protein E. Its function is as follows. (Microbial infection) Interacts with Hepatitis B virus envelope protein. This is Macrophage mannose receptor 1 (MRC1) from Homo sapiens (Human).